The following is a 310-amino-acid chain: Methionyl-tRNA formyltransferase (310 aa).

110-113 (SVLP) serves as a coordination point for (6S)-5,6,7,8-tetrahydrofolate. The tract at residues 283–310 (TVQPPGKKSMNAADWARGARAEDIRRAR) is disordered. The segment covering 299 to 310 (RGARAEDIRRAR) has biased composition (basic and acidic residues).

The protein belongs to the Fmt family.

It carries out the reaction L-methionyl-tRNA(fMet) + (6R)-10-formyltetrahydrofolate = N-formyl-L-methionyl-tRNA(fMet) + (6S)-5,6,7,8-tetrahydrofolate + H(+). Functionally, attaches a formyl group to the free amino group of methionyl-tRNA(fMet). The formyl group appears to play a dual role in the initiator identity of N-formylmethionyl-tRNA by promoting its recognition by IF2 and preventing the misappropriation of this tRNA by the elongation apparatus. The sequence is that of Methionyl-tRNA formyltransferase from Mycolicibacterium gilvum (strain PYR-GCK) (Mycobacterium gilvum (strain PYR-GCK)).